Reading from the N-terminus, the 1181-residue chain is WD repeat-containing protein 35 (1181 aa).

WD repeat units lie at residues 4-43 (YLSKKISIPNNVKLQCVSWNKEQGFIACGGEDGLLKVLKL), 61-100 (LSMNQTLEGHSGSVQVVTWNEQYQKLTTSDENGLIIVWML), 105-143 (WIEEMINNRNKSVVRSMSWNADGQKICIVYEDGAVIVGS), 147-185 (NRIWGKDLKGIQLSHVTWSADSKVLLFGMANGEIHIYDN), 193-241 (MKLS…IMRH), and 246-288 (NPVL…IVQF).

As to quaternary structure, component of the IFT complex A (IFT-A) complex. IFT-A complex is divided into a core subcomplex composed of IFT122:IFT140:WDR19 which is associated with TULP3 and a peripheral subcomplex composed of IFT43:WDR35:TTC21B. Interacts directy with IFT122, ITF43 and TTC21B. Interacts with IFT43. Interacts with CFAP61.

It is found in the cytoplasm. Its subcellular location is the cytoskeleton. The protein localises to the microtubule organizing center. It localises to the centrosome. The protein resides in the cilium axoneme. It is found in the cilium basal body. In terms of biological role, as a component of the IFT complex A (IFT-A), a complex required for retrograde ciliary transport and entry into cilia of G protein-coupled receptors (GPCRs), it is involved in ciliogenesis and ciliary protein trafficking. May promote CASP3 activation and TNF-stimulated apoptosis. This Homo sapiens (Human) protein is WD repeat-containing protein 35.